We begin with the raw amino-acid sequence, 351 residues long: Ferrochelatase (351 aa).

Positions 184 and 265 each coordinate Fe cation.

This sequence belongs to the ferrochelatase family.

The protein localises to the cytoplasm. The catalysed reaction is heme b + 2 H(+) = protoporphyrin IX + Fe(2+). The protein operates within porphyrin-containing compound metabolism; protoheme biosynthesis; protoheme from protoporphyrin-IX: step 1/1. Functionally, catalyzes the ferrous insertion into protoporphyrin IX. The protein is Ferrochelatase of Rhodopirellula baltica (strain DSM 10527 / NCIMB 13988 / SH1).